The primary structure comprises 180 residues: Ribosome maturation factor RimM (180 aa).

The 74-residue stretch at 104-177 (PEEFHDHQLV…RVVVDPPGGL (74 aa)) folds into the PRC barrel domain.

It belongs to the RimM family. Binds ribosomal protein uS19.

It localises to the cytoplasm. Its function is as follows. An accessory protein needed during the final step in the assembly of 30S ribosomal subunit, possibly for assembly of the head region. Essential for efficient processing of 16S rRNA. May be needed both before and after RbfA during the maturation of 16S rRNA. It has affinity for free ribosomal 30S subunits but not for 70S ribosomes. This Salinispora arenicola (strain CNS-205) protein is Ribosome maturation factor RimM.